The sequence spans 591 residues: MEKRTSYCGELNEAHIGQSVVLHGWVQKRRDLGGLIFIDLRDREGIVQVVFNPEFSKEALEIADSVRNEFVVTIKGTVHARGEKAINEKLATGKVEVLAEEITILNTSKTPPFYIEDGVNVSDELRLKYRYLDLRRPEMNNIFKMRHTVTRTFRNKLDALGFFDIETPYLTKSTPEGARDYLVPSRVYPGNFYALPQSPQILKQLLMTAGFDKYYQIVRCFRDEDLRGDRQPEFTQIDLETSFLTKEEIQAITEDMLVDVVKEAKNITIDKPFPRMTYKEAMDRFGSDKPDIRFGLELQNVSDVVKDVDFKVFQSAIENGGEVKAINAKSAAANFSRKDLDALGVFVANYGAKGLAWLKVEASELKGPIAKFFPEDKAADLKAALQAEDGDLLLFAADKADIVAASLGALRNKLGKDLNLINEEELAFLWVTDWPLFEYDEEAGRYVSAHHPFTLPKEEDIPLLETDSSKVMAEAYDIVLNGYEIGGGSLRIYKKEVQESMFRALGFTDESAKEQFGFLMDALEYGTPPHGGIALGLDRIVMILAGRNNLRDTIAFPKTGSAVDPLTNAPGEVSAAQLAELKLETVKKETN.

Glu-176 serves as a coordination point for L-aspartate. Positions 200 to 203 (QILK) are aspartate. L-aspartate is bound at residue Arg-222. ATP contacts are provided by residues 222-224 (RDE) and Gln-231. His-450 serves as a coordination point for L-aspartate. Glu-484 serves as a coordination point for ATP. Residue Arg-491 coordinates L-aspartate. Residue 536–539 (GLDR) participates in ATP binding.

This sequence belongs to the class-II aminoacyl-tRNA synthetase family. Type 1 subfamily. Homodimer.

The protein resides in the cytoplasm. The catalysed reaction is tRNA(Asp) + L-aspartate + ATP = L-aspartyl-tRNA(Asp) + AMP + diphosphate. In terms of biological role, catalyzes the attachment of L-aspartate to tRNA(Asp) in a two-step reaction: L-aspartate is first activated by ATP to form Asp-AMP and then transferred to the acceptor end of tRNA(Asp). This chain is Aspartate--tRNA ligase, found in Listeria monocytogenes serotype 4a (strain HCC23).